The primary structure comprises 185 residues: MAEATYTPRLRTHYDSVVRPKLIEEFGYKNPMQVPVIEKIVINMGVGEATADTKKVTTAAADLARIAGQKPVLTRARKAISNFKLRENQPVGAKVTLRQARMYEFMDRLITVALPRVRDFRGLNPKSFDGRGNYAMGMKEHIVFPEINYDQVEQIWGMDIIVCTTAKTDDEARALLRAFNFPFRQ.

Belongs to the universal ribosomal protein uL5 family. As to quaternary structure, part of the 50S ribosomal subunit; part of the 5S rRNA/L5/L18/L25 subcomplex. Contacts the 5S rRNA and the P site tRNA. Forms a bridge to the 30S subunit in the 70S ribosome.

Functionally, this is one of the proteins that bind and probably mediate the attachment of the 5S RNA into the large ribosomal subunit, where it forms part of the central protuberance. In the 70S ribosome it contacts protein S13 of the 30S subunit (bridge B1b), connecting the 2 subunits; this bridge is implicated in subunit movement. Contacts the P site tRNA; the 5S rRNA and some of its associated proteins might help stabilize positioning of ribosome-bound tRNAs. The polypeptide is Large ribosomal subunit protein uL5 (Azorhizobium caulinodans (strain ATCC 43989 / DSM 5975 / JCM 20966 / LMG 6465 / NBRC 14845 / NCIMB 13405 / ORS 571)).